We begin with the raw amino-acid sequence, 778 residues long: DEK domain-containing chromatin-associated protein 4 (778 aa).

Disordered regions lie at residues 1-334 (MGEE…RPVR) and 475-689 (LVNE…PSDE). A compositionally biased stretch (polar residues) spans 14–26 (ANGTSSLQKTSDA). 4 stretches are compositionally biased toward basic and acidic residues: residues 40–95 (EVQE…PEAD), 121–153 (AVMK…KLEG), 165–185 (EEKL…KVEN), and 209–243 (TNKG…TESK). The stretch at 191-300 (KEEALKEKNE…KEDIKKSNKR (110 aa)) forms a coiled coil. Positions 244–286 (DENEDKEEEKEDEKEESMDDKEDEKEESNDDDKEDEKEESNDD) are enriched in acidic residues. 2 stretches are compositionally biased toward basic and acidic residues: residues 287 to 296 (KEDKKEDIKK) and 303 to 323 (GKTE…DIEP). The Nuclear localization signal 1 motif lies at 289–296 (DKKEDIKK). The Nuclear localization signal 2 signature appears at 489–496 (PKKSSPAA). The span at 491–502 (KSSPAAGSSSSK) shows a compositional bias: low complexity. The stretch at 526–587 (DDESEEEKED…EESEEETKKK (62 aa)) forms a coiled coil. Acidic residues-rich tracts occupy residues 527-553 (DESE…EENE) and 560-582 (SEDE…ESEE). The Nuclear localization signal 3 motif lies at 618-625 (PKKATQKR). The segment covering 621–631 (ATQKRSAGKRK) has biased composition (basic residues). Over residues 678–689 (KGKDKNKEPSDE) the composition is skewed to basic and acidic residues. The 56-residue stretch at 685 to 740 (EPSDEELKTAIIDILKGVDFNTATFTDILKRLDAKFNISLASKKSSIKRMIQDELT) folds into the DEK-C domain. 2 DNA-binding regions span residues 703 to 717 (DFNT…KRLD) and 732 to 736 (KRMIQ). A coiled-coil region spans residues 732 to 766 (KRMIQDELTKLADEAEDEEGEEEDAEHEEEEEKEK). The interval 741–778 (KLADEAEDEEGEEEDAEHEEEEEKEKAKGSGGGEEVKA) is disordered. Positions 745-763 (EAEDEEGEEEDAEHEEEEE) are enriched in acidic residues. Over residues 764–778 (KEKAKGSGGGEEVKA) the composition is skewed to basic and acidic residues.

Interacts with DEK3.

The protein localises to the nucleus. Its subcellular location is the nucleolus. Functionally, chromatin-associated protein which contributes to the modulation of chromatin structure (such as super-helical structure of DNA) and function. Binds to chromatin of protein-coding genes throughout the genome to regulate nucleosome occupancy and chromatin accessibility, and to modulate the expression of target genes. This is DEK domain-containing chromatin-associated protein 4 from Arabidopsis thaliana (Mouse-ear cress).